A 363-amino-acid chain; its full sequence is Replication factor C subunit 4 (363 aa).

Met-1 is subject to N-acetylmethionine. Residues 1–36 (MQAFLKGTSISTKPPLTKDRGVAASAGSSGENKKAK) form a disordered region. N6-acetyllysine occurs at positions 6 and 13. An ATP-binding site is contributed by 78–85 (GPPGTGKT).

It belongs to the activator 1 small subunits family. In terms of assembly, subunit of the RFC complex, an heteropentameric complex consisting of a large subunit RFC1 and four small subunits RFC2, RFC3, RFC4 and RFC5; the RFC complex interacts with PCNA. Forms an heterotetrameric complex with RFC2, RFC3 and RFC5; this complex has ATPase activity but is not stimulated by PCNA. The heterotetramer of subunits RFC2, RFC3, RFC4 and RFC5 interacts with RAD17. Interacts with ATAD5. Interacts with CTF18. Interacts with CNTD1; this interaction facilitates crossover formation.

It localises to the nucleus. Its function is as follows. Subunit of the replication factor C (RFC) complex which acts during elongation of primed DNA templates by DNA polymerases delta and epsilon, and is necessary for ATP-dependent loading of proliferating cell nuclear antigen (PCNA) onto primed DNA. The RFC4 subunit probably functions as a scaffold on which the other complex components can assemble. The polypeptide is Replication factor C subunit 4 (RFC4) (Homo sapiens (Human)).